Consider the following 421-residue polypeptide: Serine hydroxymethyltransferase (421 aa).

Residues Leu121 and 125–127 (GHL) contribute to the (6S)-5,6,7,8-tetrahydrofolate site. An N6-(pyridoxal phosphate)lysine modification is found at Lys229.

This sequence belongs to the SHMT family. Homodimer. Requires pyridoxal 5'-phosphate as cofactor.

The protein localises to the cytoplasm. It catalyses the reaction (6R)-5,10-methylene-5,6,7,8-tetrahydrofolate + glycine + H2O = (6S)-5,6,7,8-tetrahydrofolate + L-serine. It functions in the pathway one-carbon metabolism; tetrahydrofolate interconversion. It participates in amino-acid biosynthesis; glycine biosynthesis; glycine from L-serine: step 1/1. Catalyzes the reversible interconversion of serine and glycine with tetrahydrofolate (THF) serving as the one-carbon carrier. This reaction serves as the major source of one-carbon groups required for the biosynthesis of purines, thymidylate, methionine, and other important biomolecules. Also exhibits THF-independent aldolase activity toward beta-hydroxyamino acids, producing glycine and aldehydes, via a retro-aldol mechanism. The protein is Serine hydroxymethyltransferase of Haemophilus influenzae (strain PittGG).